Here is a 443-residue protein sequence, read N- to C-terminus: D-alanyl-D-alanine carboxypeptidase DacA (443 aa).

An N-terminal signal peptide occupies residues 1–31 (MNIKKCKQLLMSLVVLTLAVTCLAPMSKAKA). Catalysis depends on Ser67, which acts as the Acyl-ester intermediate. Residue Lys70 is the Proton acceptor of the active site. The active site involves Ser131. Lys258 is a substrate binding site.

It belongs to the peptidase S11 family.

The protein resides in the secreted. The protein localises to the cell wall. Its subcellular location is the cell membrane. It is found in the membrane raft. The catalysed reaction is Preferential cleavage: (Ac)2-L-Lys-D-Ala-|-D-Ala. Also transpeptidation of peptidyl-alanyl moieties that are N-acyl substituents of D-alanine.. Its pathway is cell wall biogenesis; peptidoglycan biosynthesis. Functionally, removes C-terminal D-alanyl residues from sugar-peptide cell wall precursors. The sequence is that of D-alanyl-D-alanine carboxypeptidase DacA (dacA) from Bacillus subtilis (strain 168).